We begin with the raw amino-acid sequence, 475 residues long: Divinyl ether synthase CYP74M1 (475 aa).

Cysteine 427 contacts heme.

Belongs to the cytochrome P450 family. It depends on heme as a cofactor.

It catalyses the reaction (13S)-hydroperoxy-(9Z,11E)-octadecadienoate = etheroleate + H2O. The enzyme catalyses (13S)-hydroperoxy-(9Z,11E,15Z)-octadecatrienoate = etherolenate + H2O. The protein operates within lipid metabolism; oxylipin biosynthesis. Functionally, divinyl ether synthase involved in oxylipin biosynthesis. Catalyzes the conversion of (13S)-hydroperoxy-(9Z,11E)-octadecadienoate (13-HPOD) to etheroleate and (13S)-hydroperoxy-(9Z,11E,15Z)-octadecatrienoate (13-HPOT) to etherolenate. Has no activity with the corresponding 9-hydroperoxides (9-HPOD and 9-HPOT). The chain is Divinyl ether synthase CYP74M1 from Selaginella moellendorffii (Spikemoss).